The primary structure comprises 222 residues: Orotate phosphoribosyltransferase (222 aa).

Lysine 29 is a 5-phospho-alpha-D-ribose 1-diphosphate binding site. Position 37-38 (37-38 (FF)) interacts with orotate. 5-phospho-alpha-D-ribose 1-diphosphate is bound by residues 75-76 (YK), arginine 101, lysine 102, lysine 105, histidine 107, and 126-134 (DDVISAGTS). Positions 130 and 158 each coordinate orotate.

The protein belongs to the purine/pyrimidine phosphoribosyltransferase family. PyrE subfamily. Homodimer. The cofactor is Mg(2+).

The enzyme catalyses orotidine 5'-phosphate + diphosphate = orotate + 5-phospho-alpha-D-ribose 1-diphosphate. The protein operates within pyrimidine metabolism; UMP biosynthesis via de novo pathway; UMP from orotate: step 1/2. In terms of biological role, catalyzes the transfer of a ribosyl phosphate group from 5-phosphoribose 1-diphosphate to orotate, leading to the formation of orotidine monophosphate (OMP). The sequence is that of Orotate phosphoribosyltransferase from Polynucleobacter asymbioticus (strain DSM 18221 / CIP 109841 / QLW-P1DMWA-1) (Polynucleobacter necessarius subsp. asymbioticus).